Consider the following 418-residue polypeptide: Tyrosine--tRNA ligase (418 aa).

Y34 is a binding site for L-tyrosine. The short motif at P39–H48 is the 'HIGH' region element. L-tyrosine-binding residues include Y169 and Q173. A 'KMSKS' region motif is present at residues K229 to S233. Residue K232 participates in ATP binding. An S4 RNA-binding domain is found at L352–Y418.

Belongs to the class-I aminoacyl-tRNA synthetase family. TyrS type 1 subfamily. As to quaternary structure, homodimer.

It localises to the cytoplasm. It catalyses the reaction tRNA(Tyr) + L-tyrosine + ATP = L-tyrosyl-tRNA(Tyr) + AMP + diphosphate + H(+). In terms of biological role, catalyzes the attachment of tyrosine to tRNA(Tyr) in a two-step reaction: tyrosine is first activated by ATP to form Tyr-AMP and then transferred to the acceptor end of tRNA(Tyr). This chain is Tyrosine--tRNA ligase, found in Streptococcus equi subsp. zooepidemicus (strain H70).